Consider the following 355-residue polypeptide: Anthranilate phosphoribosyltransferase (355 aa).

Residues glycine 85, 88–89 (GD), threonine 93, 95–98 (NIST), 113–121 (KHGNRAASS), and serine 125 contribute to the 5-phospho-alpha-D-ribose 1-diphosphate site. Glycine 85 is an anthranilate binding site. Residue serine 97 participates in Mg(2+) binding. Asparagine 116 provides a ligand contact to anthranilate. Arginine 171 contacts anthranilate. Mg(2+) contacts are provided by aspartate 229 and glutamate 230.

This sequence belongs to the anthranilate phosphoribosyltransferase family. Homodimer. Mg(2+) is required as a cofactor.

It catalyses the reaction N-(5-phospho-beta-D-ribosyl)anthranilate + diphosphate = 5-phospho-alpha-D-ribose 1-diphosphate + anthranilate. Its pathway is amino-acid biosynthesis; L-tryptophan biosynthesis; L-tryptophan from chorismate: step 2/5. Catalyzes the transfer of the phosphoribosyl group of 5-phosphorylribose-1-pyrophosphate (PRPP) to anthranilate to yield N-(5'-phosphoribosyl)-anthranilate (PRA). This is Anthranilate phosphoribosyltransferase from Acidothermus cellulolyticus (strain ATCC 43068 / DSM 8971 / 11B).